A 293-amino-acid chain; its full sequence is 4-hydroxy-tetrahydrodipicolinate synthase (293 aa).

Pyruvate is bound at residue Thr-45. Tyr-133 acts as the Proton donor/acceptor in catalysis. The active-site Schiff-base intermediate with substrate is Lys-161. Residue Ile-204 coordinates pyruvate.

The protein belongs to the DapA family. As to quaternary structure, homotetramer; dimer of dimers.

The protein resides in the cytoplasm. The enzyme catalyses L-aspartate 4-semialdehyde + pyruvate = (2S,4S)-4-hydroxy-2,3,4,5-tetrahydrodipicolinate + H2O + H(+). Its pathway is amino-acid biosynthesis; L-lysine biosynthesis via DAP pathway; (S)-tetrahydrodipicolinate from L-aspartate: step 3/4. Catalyzes the condensation of (S)-aspartate-beta-semialdehyde [(S)-ASA] and pyruvate to 4-hydroxy-tetrahydrodipicolinate (HTPA). This Yersinia pseudotuberculosis serotype I (strain IP32953) protein is 4-hydroxy-tetrahydrodipicolinate synthase.